The primary structure comprises 185 residues: Peptidyl-tRNA hydrolase (185 aa).

Tyrosine 14 is a binding site for tRNA. Catalysis depends on histidine 19, which acts as the Proton acceptor. The tRNA site is built by tyrosine 65, asparagine 67, and asparagine 113.

This sequence belongs to the PTH family. In terms of assembly, monomer.

The protein localises to the cytoplasm. The catalysed reaction is an N-acyl-L-alpha-aminoacyl-tRNA + H2O = an N-acyl-L-amino acid + a tRNA + H(+). Functionally, hydrolyzes ribosome-free peptidyl-tRNAs (with 1 or more amino acids incorporated), which drop off the ribosome during protein synthesis, or as a result of ribosome stalling. In terms of biological role, catalyzes the release of premature peptidyl moieties from peptidyl-tRNA molecules trapped in stalled 50S ribosomal subunits, and thus maintains levels of free tRNAs and 50S ribosomes. The polypeptide is Peptidyl-tRNA hydrolase (Rickettsia conorii (strain ATCC VR-613 / Malish 7)).